A 203-amino-acid polypeptide reads, in one-letter code: NAD(P)H dehydrogenase (quinone) (203 aa).

Residues 3-194 (VLIVYYSLYG…DAARFQGRHI (192 aa)) enclose the Flavodoxin-like domain. FMN is bound by residues 9-14 (SLYGHV) and 82-84 (TRF). Residue Tyr11 coordinates NAD(+). Residue Trp102 coordinates substrate. Residues 117-123 (STATQHG) and His138 each bind FMN.

It belongs to the WrbA family. The cofactor is FMN.

It carries out the reaction a quinone + NADH + H(+) = a quinol + NAD(+). The enzyme catalyses a quinone + NADPH + H(+) = a quinol + NADP(+). The polypeptide is NAD(P)H dehydrogenase (quinone) (Solidesulfovibrio magneticus (strain ATCC 700980 / DSM 13731 / RS-1) (Desulfovibrio magneticus)).